Consider the following 492-residue polypeptide: Cyclic di-GMP phosphodiesterase VC_1295 (492 aa).

A run of 6 helical transmembrane segments spans residues 14-34, 49-69, 80-100, 111-131, 160-180, and 205-225; these read IYHAPLTFGLYALAGVLFALY, EIATQVGAVFILAWLIRHTLL, FIQLDTALLFAMSLPLALYYN, LKVLFGMTLFGFFTGALLQLS, LIGLIVLLISTLTVMLSMVAI, and EFAFLSLVLGGYITAILVLWS. The 53-residue stretch at 226–278 folds into the HAMP domain; it reads RMMKEILDHQERSLQAVTQGNLQVRLPVYSNDELGNVAMLTNQMLDSLEATQN. The region spanning 280–490 is the HD-GYP domain; it reads VKTTRDVAIV…FVAIAAHFKD (211 aa).

The protein localises to the cell inner membrane. It carries out the reaction 3',3'-c-di-GMP + 2 H2O = 2 GMP + 2 H(+). Its function is as follows. Phosphodiesterase (PDE) that catalyzes the hydrolysis of cyclic diguanylate (c-di-GMP) to GMP in vitro. Increases motility and decreases biofilm formation in vivo. This Vibrio cholerae serotype O1 (strain ATCC 39315 / El Tor Inaba N16961) protein is Cyclic di-GMP phosphodiesterase VC_1295.